Reading from the N-terminus, the 484-residue chain is Argininosuccinate lyase (484 aa).

The protein belongs to the lyase 1 family. Argininosuccinate lyase subfamily.

Its subcellular location is the cytoplasm. It catalyses the reaction 2-(N(omega)-L-arginino)succinate = fumarate + L-arginine. The protein operates within amino-acid biosynthesis; L-arginine biosynthesis; L-arginine from L-ornithine and carbamoyl phosphate: step 3/3. The protein is Argininosuccinate lyase of Methanocaldococcus jannaschii (strain ATCC 43067 / DSM 2661 / JAL-1 / JCM 10045 / NBRC 100440) (Methanococcus jannaschii).